The sequence spans 425 residues: Oxalate decarboxylase ARB_02208 (425 aa).

The first 19 residues, 1-19, serve as a signal peptide directing secretion; that stretch reads MKFGSALVAAVAAVAGVAA. The region spanning 73-236 is the Cupin type-1 1 domain; it reads FSLSKTRMFH…FNISTGGTFD (164 aa). Mn(2+) contacts are provided by histidine 116, histidine 118, glutamate 122, and histidine 161. N-linked (GlcNAc...) asparagine glycans are attached at residues asparagine 228, asparagine 247, asparagine 254, and asparagine 265. The region spanning 270–414 is the Cupin type-1 2 domain; sequence FHIRDAPEIQ…AINVPIDVID (145 aa). Residues histidine 317, histidine 319, glutamate 324, and histidine 363 each coordinate Mn(2+). Asparagine 367 carries N-linked (GlcNAc...) asparagine glycosylation. The active-site Proton donor is the glutamate 378.

Requires Mn(2+) as cofactor.

Its subcellular location is the secreted. The catalysed reaction is oxalate + H(+) = formate + CO2. Its function is as follows. Converts oxalate to formate and CO(2) in an O(2)-dependent reaction. Can also catalyze minor side reactions: oxalate oxidation to produce H(2)O(2), and oxalate-dependent, H(2)O(2)-independent dye oxidations. The polypeptide is Oxalate decarboxylase ARB_02208 (Arthroderma benhamiae (strain ATCC MYA-4681 / CBS 112371) (Trichophyton mentagrophytes)).